Consider the following 183-residue polypeptide: Nucleosome assembly protein 1-like 5 (183 aa).

The interval 1-71 is disordered; it reads MADSENQGPA…APKPKNDFIE (71 aa). Low complexity-rich tracts occupy residues 7-21 and 28-49; these read QGPA…AAEA and AEGG…SAAG. A coiled-coil region spans residues 81 to 107; the sequence is VLALKKLQKRCDKIEAKFDKEFQALEK. Residues 135-161 show a composition bias toward acidic residues; sequence EGEEEEEEEYEDDEEEGEEEEEEEEAA. The segment at 135 to 183 is disordered; the sequence is EGEEEEEEEYEDDEEEGEEEEEEEEAAAEAAAGAKHDDAHAEMPDDAKK. Over residues 168–183 the composition is skewed to basic and acidic residues; the sequence is AKHDDAHAEMPDDAKK.

The protein belongs to the nucleosome assembly protein (NAP) family.

It localises to the nucleus. The sequence is that of Nucleosome assembly protein 1-like 5 (NAP1L5) from Pongo abelii (Sumatran orangutan).